A 1016-amino-acid chain; its full sequence is Mastermind-like protein 1 (1016 aa).

The required for interaction with NOTCH proteins stretch occupies residues 1-123 (MVLPTCPMAE…NLDSATSPQN (123 aa)). At S45 the chain carries Phosphoserine. Disordered regions lie at residues 65-184 (QAKA…LGLD), 263-487 (PDED…PSHV), 561-617 (KPKP…SQQQ), 658-681 (EKQQ…QGSF), and 796-953 (AYGQ…GGRA). The span at 67 to 76 (KAKRAGKHRQ) shows a compositional bias: basic residues. The segment covering 93–115 (DAADGPEHGRPATHLHDTVKRNL) has biased composition (basic and acidic residues). Residues 116–129 (DSATSPQNGDQQNG) are compositionally biased toward polar residues. The residue at position 120 (S120) is a Phosphoserine. Positions 263–282 (PDEDMKDLFNEDFEEKKDPE) are enriched in basic and acidic residues. Over residues 283-292 (SSGSATQTPL) the composition is skewed to polar residues. 2 positions are modified to phosphoserine: S303 and S314. The segment covering 322 to 353 (AGQTFLGPSSAPVSTDSPSLGGSQTLFHTSGQ) has biased composition (polar residues). Residue S360 is modified to Phosphoserine. A compositionally biased stretch (polar residues) spans 392–403 (ELSSAHQLQQIA). Residues 413-426 (QNPQQATPAPAPGQ) show a composition bias toward low complexity. Polar residues-rich tracts occupy residues 427 to 439 (MSTW…SHSS), 451 to 463 (SPSS…TNSK), 577 to 595 (QEQN…SVGT), and 602 to 617 (VASS…SQQQ). Residues 801-810 (SLGSSGLSQQ) are compositionally biased toward low complexity. K822 carries the N6-acetyllysine modification. The segment covering 834-885 (GQNSSWQHQGMPNLSGQTPGNSNVSPFTAASSFHMQQQAHLKMSSPQFSQAV) has biased composition (polar residues). S1015 is subject to Phosphoserine.

This sequence belongs to the mastermind family. Interacts (via N-terminus) with NOTCH1, NOTCH2, NOTCH3 and NOTCH4 (via ankyrin repeat region). Interacts (via N-terminus) with p53 (via DNA-binding region). Forms a DNA-binding complex with Notch proteins and RBPSUH/RBP-J kappa/CBF1. Also binds CREBBP/CBP and CDK8. Forms a complex with PRAG1, NOTCH1 and MAML1, in a MAML1-dependent manner. As to expression, widely expressed with highest levels in heart, pancreas, peripheral blood leukocytes and spleen.

It localises to the nucleus speckle. Functionally, acts as a transcriptional coactivator for NOTCH proteins. Has been shown to amplify NOTCH-induced transcription of HES1. Enhances phosphorylation and proteolytic turnover of the NOTCH intracellular domain in the nucleus through interaction with CDK8. Binds to CREBBP/CBP which promotes nucleosome acetylation at NOTCH enhancers and activates transcription. Induces phosphorylation and localization of CREBBP to nuclear foci. Plays a role in hematopoietic development by regulating NOTCH-mediated lymphoid cell fate decisions. The protein is Mastermind-like protein 1 of Homo sapiens (Human).